Reading from the N-terminus, the 1050-residue chain is Atrial natriuretic peptide receptor 2 (1050 aa).

The signal sequence occupies residues 1 to 19 (MDLGHSLFVVFTCFLMARC). Over 20 to 460 (RTEIGKNITV…FCNEDQLPVL (441 aa)) the chain is Extracellular. N-linked (GlcNAc...) asparagine glycans are attached at residues N26 and N74. C84 and C110 form a disulfide bridge. N169, N203, N285, N352, N366, and N415 each carry an N-linked (GlcNAc...) asparagine glycan. Residues C236 and C339 are joined by a disulfide bond. A helical transmembrane segment spans residues 461 to 481 (GIVAVGSGLALIIFGISSFLI). Residues 482 to 1050 (YRKLKLEKEL…LGEKTDVYVI (569 aa)) are Cytoplasmic-facing. The Protein kinase domain maps to 517 to 790 (SRLTISQRGS…PDFSYIKIFV (274 aa)). In terms of domain architecture, Guanylate cyclase spans 865 to 995 (TIYFSDIVGF…DTVNTASRME (131 aa)).

Belongs to the adenylyl cyclase class-4/guanylyl cyclase family. Post-translationally, phosphorylated. Phosphorylation of the protein kinase-like domain is required for full activation by CNP. In terms of processing, glycosylated. High levels found in liver, atrium and gill. Moderate levels found in brain and ventricle, and low levels in esophageal sphincter, stomach, posterior intestine and kidney.

It is found in the cell membrane. It carries out the reaction GTP = 3',5'-cyclic GMP + diphosphate. Functionally, receptor for the C-type natriuretic peptide NPPC/CNP hormone. Has guanylate cyclase activity upon binding of its ligand. May play a role in the regulation of skeletal growth. This Anguilla japonica (Japanese eel) protein is Atrial natriuretic peptide receptor 2 (npr2).